Reading from the N-terminus, the 654-residue chain is Translation factor GUF1, mitochondrial (654 aa).

Residues 57–237 (ENYRNFSIVA…SVIKNIPSPV (181 aa)) form the tr-type G domain. GTP-binding positions include 66–73 (AHVDHGKS), 130–134 (DTPGH), and 184–187 (NKID).

This sequence belongs to the TRAFAC class translation factor GTPase superfamily. Classic translation factor GTPase family. LepA subfamily.

The protein localises to the mitochondrion inner membrane. The enzyme catalyses GTP + H2O = GDP + phosphate + H(+). Functionally, promotes mitochondrial protein synthesis. May act as a fidelity factor of the translation reaction, by catalyzing a one-codon backward translocation of tRNAs on improperly translocated ribosomes. Binds to mitochondrial ribosomes in a GTP-dependent manner. In Candida albicans (strain SC5314 / ATCC MYA-2876) (Yeast), this protein is Translation factor GUF1, mitochondrial.